A 379-amino-acid chain; its full sequence is Succinyl-diaminopimelate desuccinylase (379 aa).

His-70 serves as a coordination point for Zn(2+). Asp-72 is an active-site residue. Asp-103 contacts Zn(2+). Glu-137 (proton acceptor) is an active-site residue. Zn(2+)-binding residues include Glu-138, Glu-166, and His-352.

Belongs to the peptidase M20A family. DapE subfamily. In terms of assembly, homodimer. Zn(2+) is required as a cofactor. Requires Co(2+) as cofactor.

The catalysed reaction is N-succinyl-(2S,6S)-2,6-diaminopimelate + H2O = (2S,6S)-2,6-diaminopimelate + succinate. Its pathway is amino-acid biosynthesis; L-lysine biosynthesis via DAP pathway; LL-2,6-diaminopimelate from (S)-tetrahydrodipicolinate (succinylase route): step 3/3. Catalyzes the hydrolysis of N-succinyl-L,L-diaminopimelic acid (SDAP), forming succinate and LL-2,6-diaminopimelate (DAP), an intermediate involved in the bacterial biosynthesis of lysine and meso-diaminopimelic acid, an essential component of bacterial cell walls. This is Succinyl-diaminopimelate desuccinylase from Burkholderia vietnamiensis (strain G4 / LMG 22486) (Burkholderia cepacia (strain R1808)).